A 127-amino-acid polypeptide reads, in one-letter code: Ribonuclease P protein component 1 (127 aa).

The protein belongs to the eukaryotic/archaeal RNase P protein component 1 family. As to quaternary structure, consists of a catalytic RNA component and at least 5 protein subunits. Forms a heterodimeric subcomplex with Rnp4. Reconstituted enzyme missing individual protein subunits is suboptimally active, showing each subunit contributes to optimization of activity.

The protein localises to the cytoplasm. It catalyses the reaction Endonucleolytic cleavage of RNA, removing 5'-extranucleotides from tRNA precursor.. Functionally, part of ribonuclease P (RNase P), a protein complex that generates mature tRNA molecules by cleaving their 5'-ends. Binds RNase P RNA. This is Ribonuclease P protein component 1 from Pyrococcus horikoshii (strain ATCC 700860 / DSM 12428 / JCM 9974 / NBRC 100139 / OT-3).